A 159-amino-acid chain; its full sequence is uncharacterized protein (159 aa).

Positions Met1–Ala20 are cleaved as a signal peptide.

This is an uncharacterized protein from Pasteurella multocida (strain Pm70).